A 463-amino-acid chain; its full sequence is ATP synthase subunit beta 1 (463 aa).

An ATP-binding site is contributed by 152-159 (GGAGVGKT).

Belongs to the ATPase alpha/beta chains family. In terms of assembly, F-type ATPases have 2 components, CF(1) - the catalytic core - and CF(0) - the membrane proton channel. CF(1) has five subunits: alpha(3), beta(3), gamma(1), delta(1), epsilon(1). CF(0) has three main subunits: a(1), b(2) and c(9-12). The alpha and beta chains form an alternating ring which encloses part of the gamma chain. CF(1) is attached to CF(0) by a central stalk formed by the gamma and epsilon chains, while a peripheral stalk is formed by the delta and b chains.

The protein localises to the cell inner membrane. It carries out the reaction ATP + H2O + 4 H(+)(in) = ADP + phosphate + 5 H(+)(out). Functionally, produces ATP from ADP in the presence of a proton gradient across the membrane. The catalytic sites are hosted primarily by the beta subunits. This chain is ATP synthase subunit beta 1, found in Shewanella frigidimarina (strain NCIMB 400).